Consider the following 293-residue polypeptide: EID1-like F-box protein 1 (293 aa).

Residues 16 to 68 enclose the F-box domain; it reads QCTKGHLNEDVLLLVFQHLNWNPKLVATLSCVCRWFDDFAKRVLWKEFCKTRA. The tract at residues 245–293 is disordered; the sequence is AIPSEDNNHTEKKQDNGFPRENVLKRRNSLLGGSENGPPPQKRLTNPNQ. The span at 250-259 shows a compositional bias: basic and acidic residues; the sequence is DNNHTEKKQD.

This is EID1-like F-box protein 1 (EDL1) from Arabidopsis thaliana (Mouse-ear cress).